A 540-amino-acid chain; its full sequence is Chaperonin GroEL (540 aa).

ATP-binding positions include 30–33 (TLGP), 87–91 (DGTTT), Gly414, 479–481 (NAL), and Asp495.

This sequence belongs to the chaperonin (HSP60) family. In terms of assembly, forms a cylinder of 14 subunits composed of two heptameric rings stacked back-to-back. Interacts with the co-chaperonin GroES.

It localises to the cytoplasm. The enzyme catalyses ATP + H2O + a folded polypeptide = ADP + phosphate + an unfolded polypeptide.. Its function is as follows. Together with its co-chaperonin GroES, plays an essential role in assisting protein folding. The GroEL-GroES system forms a nano-cage that allows encapsulation of the non-native substrate proteins and provides a physical environment optimized to promote and accelerate protein folding. This is Chaperonin GroEL from Rubrobacter xylanophilus (strain DSM 9941 / JCM 11954 / NBRC 16129 / PRD-1).